Reading from the N-terminus, the 39-residue chain is SPbeta prophage-derived uncharacterized protein YorT (39 aa).

The sequence is that of SPbeta prophage-derived uncharacterized protein YorT (yorT) from Bacillus subtilis (strain 168).